Reading from the N-terminus, the 309-residue chain is Porphobilinogen deaminase (309 aa).

Cys234 is modified (S-(dipyrrolylmethanemethyl)cysteine).

This sequence belongs to the HMBS family. Monomer. The cofactor is dipyrromethane.

The catalysed reaction is 4 porphobilinogen + H2O = hydroxymethylbilane + 4 NH4(+). It participates in porphyrin-containing compound metabolism; protoporphyrin-IX biosynthesis; coproporphyrinogen-III from 5-aminolevulinate: step 2/4. Its function is as follows. Tetrapolymerization of the monopyrrole PBG into the hydroxymethylbilane pre-uroporphyrinogen in several discrete steps. The protein is Porphobilinogen deaminase (hemC) of Mycobacterium bovis (strain ATCC BAA-935 / AF2122/97).